The following is a 359-amino-acid chain: GTP cyclohydrolase FolE2 (359 aa).

Belongs to the GTP cyclohydrolase IV family.

It carries out the reaction GTP + H2O = 7,8-dihydroneopterin 3'-triphosphate + formate + H(+). It participates in cofactor biosynthesis; 7,8-dihydroneopterin triphosphate biosynthesis; 7,8-dihydroneopterin triphosphate from GTP: step 1/1. Its function is as follows. Converts GTP to 7,8-dihydroneopterin triphosphate. The chain is GTP cyclohydrolase FolE2 from Cereibacter sphaeroides (strain ATCC 17025 / ATH 2.4.3) (Rhodobacter sphaeroides).